The sequence spans 262 residues: Putative carbamate hydrolase RutD (262 aa).

The protein belongs to the AB hydrolase superfamily. Hydrolase RutD family.

It catalyses the reaction carbamate + 2 H(+) = NH4(+) + CO2. Involved in pyrimidine catabolism. May facilitate the hydrolysis of carbamate, a reaction that can also occur spontaneously. The polypeptide is Putative carbamate hydrolase RutD (Rhizobium rhizogenes (strain K84 / ATCC BAA-868) (Agrobacterium radiobacter)).